A 471-amino-acid polypeptide reads, in one-letter code: Putative multidrug resistance protein MdtD (471 aa).

Topologically, residues 1 to 11 (MTDLPDSTRWQ) are periplasmic. A helical transmembrane segment spans residues 12 to 32 (LWIVAFGFFMQSLDTTIVNTA). Over 33–48 (LPSMAQSLGESPLHMH) the chain is Cytoplasmic. A helical transmembrane segment spans residues 49 to 69 (MVIVSYVLTVAVMLPASGWLA). Over 70 to 76 (DKVGVRN) the chain is Periplasmic. A helical transmembrane segment spans residues 77-97 (IFFTAIVLFTLGSLFCALSGT). Over 98–101 (LNEL) the chain is Cytoplasmic. Residues 102-124 (LLARALQGVGGAMMVPVGRLTVM) traverse the membrane as a helical segment. At 125 to 137 (KIVPREQYMAAMT) the chain is on the periplasmic side. Residues 138–158 (FVTLPGQVGPLLGPALGGLLV) traverse the membrane as a helical segment. Over 159–164 (EYASWH) the chain is Cytoplasmic. A helical transmembrane segment spans residues 165–185 (WIFLINIPVGIIGAIATLMLM). The Periplasmic portion of the chain corresponds to 186–196 (PNYTMQTRRFD). The helical transmembrane segment at 197 to 217 (LSGFLLLAVGMAVLTLALDGS) threads the bilayer. Topologically, residues 218–224 (KGTGLSP) are cytoplasmic. Residues 225-245 (LTIAGLVAVGVVALVLYLLHA) form a helical membrane-spanning segment. Residues 246–262 (RNNNRALFSLKLFRTRT) are Periplasmic-facing. A helical transmembrane segment spans residues 263 to 283 (FSLGLAGSFAGRIGSGMLPFM). Over 284–285 (TP) the chain is Cytoplasmic. A helical membrane pass occupies residues 286-306 (VFLQIGLGFSPFHAGLMMIPM). Over 307–341 (VLGSMGMKRIVVQVVNCFGYRRVLVATTLGLSLVT) the chain is Periplasmic. Residues 342–362 (LLFMTTALLGWYYVLPFVLFL) traverse the membrane as a helical segment. The Cytoplasmic portion of the chain corresponds to 363 to 395 (QGMVNSTRFSSMNTLTLKDLPDNLASSGNSLLS). A helical transmembrane segment spans residues 396–416 (MIMQLSMSIGVTIAGLLLGLF). The Periplasmic portion of the chain corresponds to 417 to 430 (GSQHVSVDSGTTQT). Residues 431 to 451 (VFMYTWLSMALIIALPAFIFA) traverse the membrane as a helical segment. The Cytoplasmic segment spans residues 452–471 (RVPNDTHQNVAISRRKRSAQ).

The protein belongs to the major facilitator superfamily. TCR/Tet family.

Its subcellular location is the cell inner membrane. The chain is Putative multidrug resistance protein MdtD from Escherichia coli O139:H28 (strain E24377A / ETEC).